The primary structure comprises 543 residues: Gap junction alpha-10 protein (543 aa).

The Cytoplasmic portion of the chain corresponds to 1–16 (MGDWNLLGGILEEVHS). The chain crosses the membrane as a helical span at residues 17-37 (HSTIVGKIWLTILFIFRMLVL). The Extracellular segment spans residues 38 to 76 (RVAAEDVWDDEQSAFACNTRQPGCNNICYDDAFPISLIR). Residues 77 to 97 (FWVLQIIFVSSPSLVYMGHAL) form a helical membrane-spanning segment. The Cytoplasmic portion of the chain corresponds to 98–165 (YRLRAFEKDR…TYVLHILTRS (68 aa)). The chain crosses the membrane as a helical span at residues 166–186 (VLEVGFMIGQYILYGFQMHPL). Residues 187–209 (YKCTQPPCPNAVDCFVSRPTEKT) lie on the Extracellular side of the membrane. A helical membrane pass occupies residues 210–230 (IFMLFMHSIAAISLLLNILEI). The Cytoplasmic portion of the chain corresponds to 231-543 (FHLGIRKIMR…HSIHSVKFNS (313 aa)). Disordered regions lie at residues 306–359 (PQPR…SSFG) and 379–424 (PSFA…DRSR). Residues 317–328 (NGKKDWSEKDQH) show a composition bias toward basic and acidic residues. Positions 344–359 (AGNQHLGQQSDHSSFG) are enriched in polar residues. Basic and acidic residues predominate over residues 400–413 (TDLHSHCRDSEGSM).

Belongs to the connexin family. Alpha-type (group II) subfamily. A connexon is composed of a hexamer of connexins. In terms of tissue distribution, expressed in skeletal muscle and heart.

It localises to the cell membrane. Its subcellular location is the cell junction. It is found in the gap junction. One gap junction consists of a cluster of closely packed pairs of transmembrane channels, the connexons, through which materials of low MW diffuse from one cell to a neighboring cell. Involved in tracer coupling between horizontal cells of the retina. May play a role in the regulation of horizontal cell patterning. The polypeptide is Gap junction alpha-10 protein (GJA10) (Homo sapiens (Human)).